A 381-amino-acid chain; its full sequence is Neuropeptide Y receptor type 2 (381 aa).

A disordered region spans residues 1-35 (MGPIGTEADENQTVEEMKVEQYGPQTTPRGELVPD). Topologically, residues 1-51 (MGPIGTEADENQTVEEMKVEQYGPQTTPRGELVPDPEPELIDSTKLIEVQV) are extracellular. Asparagine 11 carries N-linked (GlcNAc...) asparagine glycosylation. Residues 52-72 (VLILAYCSIILLGVIGNSLVI) traverse the membrane as a helical segment. At 73-86 (HVVIKFKSMRTVTN) the chain is on the cytoplasmic side. Residues 87–107 (FFIANLAVADLVVNTLCLPFT) form a helical membrane-spanning segment. At 108–124 (LTYTLMGEWKMGPVLCH) the chain is on the extracellular side. A disulfide bridge links cysteine 123 with cysteine 203. The helical transmembrane segment at 125-145 (LVPYAQGLAVQVSTITLTVIA) threads the bilayer. Residues 146–165 (LDRHRCIVYHLESKISKRIS) lie on the Cytoplasmic side of the membrane. The chain crosses the membrane as a helical span at residues 166–186 (FLIIGLAWGISALLASPLAIF). Residues 187–216 (REYSLIEIIPDFEIVACTEKWPGEEKSIYG) lie on the Extracellular side of the membrane. A helical transmembrane segment spans residues 217–237 (TVYSLSSLLILYVLPLGIISF). At 238-268 (SYTRIWSKLKSHVSPGAANDHYHQRRQKTTK) the chain is on the cytoplasmic side. Residues 269–289 (MLVCVVVVFAVSWLPLHAFQL) traverse the membrane as a helical segment. Residues 290-304 (AVDIDSHVLDLKEYK) lie on the Extracellular side of the membrane. The chain crosses the membrane as a helical span at residues 305–325 (LIFTVFHIIAMCSTFANPLLY). The Cytoplasmic segment spans residues 326–381 (GWMNSNYRKAFLSAFRCEQRLDAIHSEVSVTFKAKKNLEVRKNSGPNDSFTEATNV). The S-palmitoyl cysteine moiety is linked to residue cysteine 342.

This sequence belongs to the G-protein coupled receptor 1 family.

The protein resides in the cell membrane. In terms of biological role, receptor for neuropeptide Y and peptide YY. The polypeptide is Neuropeptide Y receptor type 2 (NPY2R) (Macaca mulatta (Rhesus macaque)).